Reading from the N-terminus, the 346-residue chain is Peroxidase 38 (346 aa).

The N-terminal stretch at 1–22 (MHSSLIKLGFLLLLLQVSLSHA) is a signal peptide. Gln23 is modified (pyrrolidone carboxylic acid). 4 disulfide bridges follow: Cys33-Cys113, Cys66-Cys71, Cys119-Cys323, and Cys199-Cys231. The active-site Proton acceptor is His64. Ca(2+) contacts are provided by Asp65, Val68, Gly70, Asp72, and Ser74. N-linked (GlcNAc...) asparagine glycosylation is present at Asn79. Residue Pro161 coordinates substrate. His192 contacts heme b. Thr193 is a Ca(2+) binding site. Residue Asn236 is glycosylated (N-linked (GlcNAc...) asparagine). Asp244, Thr247, and Asp252 together coordinate Ca(2+).

This sequence belongs to the peroxidase family. Classical plant (class III) peroxidase subfamily. It depends on heme b as a cofactor. The cofactor is Ca(2+).

It is found in the secreted. The protein resides in the vacuole. The enzyme catalyses 2 a phenolic donor + H2O2 = 2 a phenolic radical donor + 2 H2O. Its function is as follows. Removal of H(2)O(2), oxidation of toxic reductants, biosynthesis and degradation of lignin, suberization, auxin catabolism, response to environmental stresses such as wounding, pathogen attack and oxidative stress. These functions might be dependent on each isozyme/isoform in each plant tissue. The sequence is that of Peroxidase 38 (PER38) from Arabidopsis thaliana (Mouse-ear cress).